The sequence spans 818 residues: Myosin-A (818 aa).

Position 19 is a phosphoserine; by PKG (Ser-19). One can recognise a Myosin motor domain in the interval 97–771 (MSFGDIGLLN…GAKILTKIQR (675 aa)). 191–198 (GESGAGKT) is a binding site for ATP. The tract at residues 661–671 (PHFIRCIKPNE) is actin-binding. The interval 773–818 (KLVEWENCVSVIEAAILKHKYKQKVNKNIPSLLRVQAHIRKKMVAQ) is tail.

The protein belongs to the TRAFAC class myosin-kinesin ATPase superfamily. Myosin family. Component of the glideosome complex composed of GAP50, GAP45, MTIP and MyoA; the complex is formed during the late schizont stage and in merozoites. MyoA, MTIP and GAP45 probably form an initial complex in the cytoplasm which is then recruited to the outer face of the inner membrane complex via the interaction with GAP50. Interacts with ACT1.

The protein resides in the cell membrane. Its function is as follows. Myosins are actin-based motor molecules with ATPase activity. Unconventional myosins serve in intracellular movements. Their highly divergent tails are presumed to bind to membranous compartments, which would be moved relative to actin filaments. The sequence is that of Myosin-A from Plasmodium falciparum (isolate 3D7).